A 421-amino-acid chain; its full sequence is Imidazolonepropionase (421 aa).

2 residues coordinate Fe(3+): histidine 81 and histidine 83. The Zn(2+) site is built by histidine 81 and histidine 83. 3 residues coordinate 4-imidazolone-5-propanoate: arginine 90, tyrosine 153, and histidine 186. Tyrosine 153 is a binding site for N-formimidoyl-L-glutamate. Histidine 251 provides a ligand contact to Fe(3+). Histidine 251 lines the Zn(2+) pocket. Glutamate 254 is a binding site for 4-imidazolone-5-propanoate. Aspartate 326 is a binding site for Fe(3+). Residue aspartate 326 coordinates Zn(2+). Positions 328 and 330 each coordinate N-formimidoyl-L-glutamate. Serine 331 is a 4-imidazolone-5-propanoate binding site.

It belongs to the metallo-dependent hydrolases superfamily. HutI family. It depends on Zn(2+) as a cofactor. Fe(3+) is required as a cofactor.

The protein resides in the cytoplasm. The catalysed reaction is 4-imidazolone-5-propanoate + H2O = N-formimidoyl-L-glutamate. It participates in amino-acid degradation; L-histidine degradation into L-glutamate; N-formimidoyl-L-glutamate from L-histidine: step 3/3. Catalyzes the hydrolytic cleavage of the carbon-nitrogen bond in imidazolone-5-propanoate to yield N-formimidoyl-L-glutamate. It is the third step in the universal histidine degradation pathway. In Streptococcus pyogenes serotype M3 (strain SSI-1), this protein is Imidazolonepropionase.